We begin with the raw amino-acid sequence, 226 residues long: ATP synthase F(0) complex subunit a (226 aa).

A run of 6 helical transmembrane segments spans residues 14–34, 68–88, 97–117, 138–158, 164–184, and 193–213; these read ILGI…FSAP, WTLM…LGLL, QLSM…LMGF, IPML…ALAV, ITAG…LSSI, and FTIL…QAYV.

Belongs to the ATPase A chain family. In terms of assembly, component of the ATP synthase complex composed at least of ATP5F1A/subunit alpha, ATP5F1B/subunit beta, ATP5MC1/subunit c (homooctomer), MT-ATP6/subunit a, MT-ATP8/subunit 8, ATP5ME/subunit e, ATP5MF/subunit f, ATP5MG/subunit g, ATP5MK/subunit k, ATP5MJ/subunit j, ATP5F1C/subunit gamma, ATP5F1D/subunit delta, ATP5F1E/subunit epsilon, ATP5PF/subunit F6, ATP5PB/subunit b, ATP5PD/subunit d, ATP5PO/subunit OSCP. ATP synthase complex consists of a soluble F(1) head domain (subunits alpha(3) and beta(3)) - the catalytic core - and a membrane F(0) domain - the membrane proton channel (subunits c, a, 8, e, f, g, k and j). These two domains are linked by a central stalk (subunits gamma, delta, and epsilon) rotating inside the F1 region and a stationary peripheral stalk (subunits F6, b, d, and OSCP). Interacts with DNAJC30; interaction is direct.

Its subcellular location is the mitochondrion inner membrane. The enzyme catalyses H(+)(in) = H(+)(out). Subunit a, of the mitochondrial membrane ATP synthase complex (F(1)F(0) ATP synthase or Complex V) that produces ATP from ADP in the presence of a proton gradient across the membrane which is generated by electron transport complexes of the respiratory chain. ATP synthase complex consist of a soluble F(1) head domain - the catalytic core - and a membrane F(1) domain - the membrane proton channel. These two domains are linked by a central stalk rotating inside the F(1) region and a stationary peripheral stalk. During catalysis, ATP synthesis in the catalytic domain of F(1) is coupled via a rotary mechanism of the central stalk subunits to proton translocation. With the subunit c (ATP5MC1), forms the proton-conducting channel in the F(0) domain, that contains two crucial half-channels (inlet and outlet) that facilitate proton movement from the mitochondrial intermembrane space (IMS) into the matrix. Protons are taken up via the inlet half-channel and released through the outlet half-channel, following a Grotthuss mechanism. This is ATP synthase F(0) complex subunit a from Tachyglossus aculeatus aculeatus (Southeast Australian short-beaked echidna).